Here is a 271-residue protein sequence, read N- to C-terminus: tRNA (guanine-N(1)-)-methyltransferase (271 aa).

S-adenosyl-L-methionine contacts are provided by residues glycine 120 and 145 to 150; that span reads IGDYVL.

It belongs to the RNA methyltransferase TrmD family. Homodimer.

Its subcellular location is the cytoplasm. It catalyses the reaction guanosine(37) in tRNA + S-adenosyl-L-methionine = N(1)-methylguanosine(37) in tRNA + S-adenosyl-L-homocysteine + H(+). Specifically methylates guanosine-37 in various tRNAs. In Bifidobacterium longum subsp. infantis (strain ATCC 15697 / DSM 20088 / JCM 1222 / NCTC 11817 / S12), this protein is tRNA (guanine-N(1)-)-methyltransferase.